A 299-amino-acid polypeptide reads, in one-letter code: tRNA dimethylallyltransferase (299 aa).

11–18 (GPTGSGKS) contributes to the ATP binding site. Residue 13–18 (TGSGKS) coordinates substrate.

The protein belongs to the IPP transferase family. As to quaternary structure, monomer. The cofactor is Mg(2+).

It catalyses the reaction adenosine(37) in tRNA + dimethylallyl diphosphate = N(6)-dimethylallyladenosine(37) in tRNA + diphosphate. Catalyzes the transfer of a dimethylallyl group onto the adenine at position 37 in tRNAs that read codons beginning with uridine, leading to the formation of N6-(dimethylallyl)adenosine (i(6)A). The protein is tRNA dimethylallyltransferase of Pseudarthrobacter chlorophenolicus (strain ATCC 700700 / DSM 12829 / CIP 107037 / JCM 12360 / KCTC 9906 / NCIMB 13794 / A6) (Arthrobacter chlorophenolicus).